A 219-amino-acid chain; its full sequence is Small ribosomal subunit protein uS3 (219 aa).

The 69-residue stretch at 39-107 (LRKFLKKKLH…EVLIDIQEVR (69 aa)) folds into the KH type-2 domain.

The protein belongs to the universal ribosomal protein uS3 family. As to quaternary structure, part of the 30S ribosomal subunit. Forms a tight complex with proteins S10 and S14.

Its function is as follows. Binds the lower part of the 30S subunit head. Binds mRNA in the 70S ribosome, positioning it for translation. This chain is Small ribosomal subunit protein uS3, found in Desulfatibacillum aliphaticivorans.